A 412-amino-acid polypeptide reads, in one-letter code: Peptidase T (412 aa).

His84 serves as a coordination point for Zn(2+). The active site involves Asp86. Asp146 serves as a coordination point for Zn(2+). Catalysis depends on Glu179, which acts as the Proton acceptor. Glu180, Asp202, and His385 together coordinate Zn(2+).

Belongs to the peptidase M20B family. Zn(2+) serves as cofactor.

It is found in the cytoplasm. The enzyme catalyses Release of the N-terminal residue from a tripeptide.. Its function is as follows. Cleaves the N-terminal amino acid of tripeptides. The chain is Peptidase T from Haemophilus influenzae (strain 86-028NP).